A 397-amino-acid polypeptide reads, in one-letter code: GTPase Obg (397 aa).

Positions 1 to 159 (MKFVDEATII…RNLRLELKVL (159 aa)) constitute an Obg domain. Residues 128-148 (TRFKSSVNRAPRQTSKGSEGE) form a disordered region. Over residues 129 to 144 (RFKSSVNRAPRQTSKG) the composition is skewed to polar residues. Residues 160–333 (ADVGLLGLPN…LVQAVMRWIE (174 aa)) enclose the OBG-type G domain. Residues 166–173 (GLPNAGKS), 191–195 (FTTLV), 213–216 (DIPG), 283–286 (NKVD), and 314–316 (SAL) each bind GTP. 2 residues coordinate Mg(2+): Ser173 and Thr193. Residues 336–347 (AEQEADNPDFAE) are compositionally biased toward acidic residues. The disordered stretch occupies residues 336–397 (AEQEADNPDF…YDVEVVYAPE (62 aa)). Residues 349–370 (EAARRRRMDEEARQKIEADRQA) are compositionally biased toward basic and acidic residues. A compositionally biased stretch (acidic residues) spans 378 to 390 (DDDDDFDDDDYDV).

The protein belongs to the TRAFAC class OBG-HflX-like GTPase superfamily. OBG GTPase family. Monomer. Requires Mg(2+) as cofactor.

It is found in the cytoplasm. An essential GTPase which binds GTP, GDP and possibly (p)ppGpp with moderate affinity, with high nucleotide exchange rates and a fairly low GTP hydrolysis rate. Plays a role in control of the cell cycle, stress response, ribosome biogenesis and in those bacteria that undergo differentiation, in morphogenesis control. This chain is GTPase Obg, found in Marinobacter nauticus (strain ATCC 700491 / DSM 11845 / VT8) (Marinobacter aquaeolei).